A 342-amino-acid chain; its full sequence is Lipase B (342 aa).

The N-terminal stretch at 1 to 18 (MKLLSLTGVAGVLATCVA) is a signal peptide. Positions 19–25 (ATPLVKR) are excised as a propeptide. An intrachain disulfide couples cysteine 47 to cysteine 89. An N-linked (GlcNAc...) asparagine glycan is attached at asparagine 99. Residues serine 130, aspartate 212, and histidine 249 contribute to the active site. Disulfide bonds link cysteine 241-cysteine 283 and cysteine 318-cysteine 336.

It catalyses the reaction a triacylglycerol + H2O = a diacylglycerol + a fatty acid + H(+). Its function is as follows. Hydrolysis of triglycerides. Is very stereospecific both in hydrolysis and in organic synthesis and has a potentially important application in glucolipid synthesis. This Pseudozyma antarctica (Yeast) protein is Lipase B.